Reading from the N-terminus, the 221-residue chain is PKHD-type hydroxylase P9215_13741 (221 aa).

The Fe2OG dioxygenase domain maps to 80 to 174 (RIHGTMFTKT…RFVVVGWIES (95 aa)). Histidine 98, aspartate 100, and histidine 155 together coordinate Fe cation. Arginine 165 serves as a coordination point for 2-oxoglutarate.

Fe(2+) serves as cofactor. L-ascorbate is required as a cofactor.

This is PKHD-type hydroxylase P9215_13741 from Prochlorococcus marinus (strain MIT 9215).